Consider the following 259-residue polypeptide: Src-like-adapter 2 (259 aa).

A compositionally biased stretch (low complexity) spans 1–20; sequence MGSLSSRGKTSSPSPSSSGP. Residues 1 to 30 are disordered; the sequence is MGSLSSRGKTSSPSPSSSGPDQEPVSMQPE. Gly2 carries N-myristoyl glycine lipidation. Residues 31-91 form the SH3 domain; it reads RHKVTAVALG…PSVYVAKVAH (61 aa). The 98-residue stretch at 93–190 folds into the SH2 domain; sequence WLYEGLSREK…GICCPLREPC (98 aa). Positions 190 to 259 are SLA C-terminal; it reads CVLQKLGPLP…SLAEDPLDDA (70 aa).

Interacts (via its C-terminal domain) with CBL (phosphorylated). Interacts (via SH2 domain) with ZAP70 (phosphorylated) and CD3Z (phosphorylated). Interacts (via SH2 domain) with CSF1R (phosphorylated). Phosphorylated by CSF1R. Mainly expressed in immune system. Highly expressed in spleen and thymus and expressed at intermediate levels in lung. Not expressed in liver, heart and brain. Isoform 1 is predominant in lung and spleen, while isoform 2 is predominant in thymus.

The protein resides in the cytoplasm. It localises to the cell membrane. The protein localises to the cytoplasmic vesicle. It is found in the late endosome. In terms of biological role, adapter protein, which negatively regulates T-cell receptor (TCR) signaling. Inhibits T-cell antigen-receptor induced activation of nuclear factor of activated T-cells. May act by linking signaling proteins such as ZAP70 with CBL, leading to a CBL dependent degradation of signaling proteins. In Mus musculus (Mouse), this protein is Src-like-adapter 2 (Sla2).